Reading from the N-terminus, the 184-residue chain is Signal peptidase I S (184 aa).

Residues 1–18 (MKSENVSKKKSILEWAKA) are Cytoplasmic-facing. A helical transmembrane segment spans residues 19–39 (IVIAVVLALLIRNFIFAPYVV). The Extracellular segment spans residues 40 to 184 (DGDSMYPTLH…YPFNEMRKTN (145 aa)). Active-site residues include Ser-43 and Lys-83.

Belongs to the peptidase S26 family.

Its subcellular location is the cell membrane. It carries out the reaction Cleavage of hydrophobic, N-terminal signal or leader sequences from secreted and periplasmic proteins.. Its function is as follows. Not essential for cell viability, but required for efficient secretion of many proteins. In Bacillus subtilis (strain 168), this protein is Signal peptidase I S (sipS).